Here is a 62-residue protein sequence, read N- to C-terminus: Photosystem II reaction center protein Z (62 aa).

2 consecutive transmembrane segments (helical) span residues 8-28 (AVFALIATSLILVIGVPVVFA) and 41-61 (FSGTSLWIGLVFLVGILNSLI).

It belongs to the PsbZ family. In terms of assembly, PSII is composed of 1 copy each of membrane proteins PsbA, PsbB, PsbC, PsbD, PsbE, PsbF, PsbH, PsbI, PsbJ, PsbK, PsbL, PsbM, PsbT, PsbY, PsbZ, Psb30/Ycf12, at least 3 peripheral proteins of the oxygen-evolving complex and a large number of cofactors. It forms dimeric complexes.

Its subcellular location is the plastid. It localises to the chloroplast thylakoid membrane. Functionally, may control the interaction of photosystem II (PSII) cores with the light-harvesting antenna, regulates electron flow through the 2 photosystem reaction centers. PSII is a light-driven water plastoquinone oxidoreductase, using light energy to abstract electrons from H(2)O, generating a proton gradient subsequently used for ATP formation. The sequence is that of Photosystem II reaction center protein Z from Piper cenocladum (Ant piper).